A 197-amino-acid chain; its full sequence is MSGRKKLTPPTHFDPEYLFKKYELLRKSVYKKFKDKMINQSDREDLMGTIDQIFLQLVSEYNPNRGVDFPYYIKRMLELRTYHHITKYLKRINGETSLYVKNEDGEVLELQDTIADMHAEEIFSRIVDLHSINPYMELGEKHRNLMIGLFIRKKTLQELAQEEGVPLDRLHARLYFLIRKFEKEHQIDTEIFGEDLY.

In terms of biological role, sigma factors are initiation factors that promote the attachment of RNA polymerase to specific initiation sites and are then released. The polypeptide is RNA polymerase sigma GP34 factor (34) (Bacillus subtilis (Bacteriophage SP01)).